Consider the following 252-residue polypeptide: Orotidine 5'-phosphate decarboxylase (252 aa).

Substrate is bound by residues Asp26, Lys48, 75–84, Thr135, Arg196, Gln205, Gly225, and Arg226; that span reads DLKFHDIPNT. Residue Lys77 is the Proton donor of the active site.

Belongs to the OMP decarboxylase family. Type 1 subfamily. Homodimer.

The catalysed reaction is orotidine 5'-phosphate + H(+) = UMP + CO2. It functions in the pathway pyrimidine metabolism; UMP biosynthesis via de novo pathway; UMP from orotate: step 2/2. Functionally, catalyzes the decarboxylation of orotidine 5'-monophosphate (OMP) to uridine 5'-monophosphate (UMP). The sequence is that of Orotidine 5'-phosphate decarboxylase from Sodalis glossinidius (strain morsitans).